We begin with the raw amino-acid sequence, 341 residues long: Thymidine kinase (341 aa).

19–26 (GAYGIGKT) is a binding site for ATP. E48 functions as the Proton acceptor in the catalytic mechanism. 2 residues coordinate substrate: Y66 and Q90. R183 is a binding site for ATP. Position 189 (R189) interacts with substrate.

It belongs to the herpesviridae thymidine kinase family. In terms of assembly, homodimer.

The enzyme catalyses thymidine + ATP = dTMP + ADP + H(+). Catalyzes the transfer of the gamma-phospho group of ATP to thymidine to generate dTMP in the salvage pathway of pyrimidine synthesis. The dTMP serves as a substrate for DNA polymerase during viral DNA replication. Allows the virus to be reactivated and to grow in non-proliferative cells lacking a high concentration of phosphorylated nucleic acid precursors. The chain is Thymidine kinase from Varicella-zoster virus (strain Dumas) (HHV-3).